We begin with the raw amino-acid sequence, 398 residues long: Selection and upkeep of intraepithelial T-cells protein 8 (398 aa).

Residues 1–25 (MMKPEFSHFFGFCVYFLFLQVMASS) form the signal peptide. The Ig-like V-type domain occupies 26–141 (EKLRVTTPTR…DVAIMNLNVT (116 aa)). At 26-244 (EKLRVTTPTR…ANELFNQDYL (219 aa)) the chain is on the extracellular side. A disulfide bridge connects residues Cys-49 and Cys-123. N-linked (GlcNAc...) asparagine glycosylation is found at Asn-92 and Asn-139. Residues 142-233 (AVGLETEIHV…TGEEKQTSII (92 aa)) enclose the Ig-like C1-type domain. Cys-163 and Cys-217 are oxidised to a cystine. Residues 245–265 (WVGIFPFSVLSLILFGVLPFI) traverse the membrane as a helical segment. Residues 266-288 (NSFFRSQGCASGCLSKCLPVVTS) lie on the Cytoplasmic side of the membrane. A helical transmembrane segment spans residues 289–309 (WPVQIVHFLVCSGVLFAVYLP). The Extracellular portion of the chain corresponds to 310–331 (HRYRVSLSDPQFPLYNNWITEL). Residues 332 to 352 (LIVILFLTICFVLPITVLLLI) form a helical membrane-spanning segment. Residues 353 to 398 (KLSPTCLAKWEKNKDDIMDSQLGLGKAREASTLYEEQSRKSWEQEK) lie on the Cytoplasmic side of the membrane.

The protein belongs to the SKINT family. In terms of tissue distribution, expressed in skin, thymus, testis and, to a lower extent, bladder, brain, heart, kidney, mammary gland, small intestine and uterus.

Its subcellular location is the membrane. Its function is as follows. May act by engaging a cell surface molecule on immature T-cells in the embryonic thymus. This Mus musculus (Mouse) protein is Selection and upkeep of intraepithelial T-cells protein 8 (Skint8).